We begin with the raw amino-acid sequence, 441 residues long: MTHDNIDILVVDDDISHCTILQALLRGWGYNVALANSGRQALEQVRERVFDLVLCDVRMAEMDGIATLKEIKALNPAIPVLIMTAYSSVETAVEALKTGALDYLIKPLDFDNLQATLEKALAHTHIIDAETPAVTASQFGMVGKSPAMQHLLSEIALVAPSEATVLIHGDSGTGKELVARAIHASSARSEKPLVTLNCAALNESLLESELFGHEKGAFTGADKRREGRFVEADGGTLFLDEIGDISPMMLVRLLRAIQEREVQRVGSNQTISVDVRLIAATHRDLAAEVNAGRFRQDLYYRLNVVAIEVPSLRQRREDIPLLAGHFLQRFAERNRKAVKGFTPQAMDLLIHYDWPGNIRELENAVERAVVLLTGEYISERELPLAIASTPIPLAQSLDIQPLVEVEKEVILAALEKTGGNKTEAARQLGITRKTLLAKLSR.

A Response regulatory domain is found at 7–121; that stretch reads DILVVDDDIS…NLQATLEKAL (115 aa). 4-aspartylphosphate is present on Asp-56. The Sigma-54 factor interaction domain maps to 141 to 370; the sequence is MVGKSPAMQH…LENAVERAVV (230 aa). ATP contacts are provided by Gly-172, Thr-173, Arg-329, and Arg-359. A DNA-binding region (H-T-H motif) is located at residues 421–440; sequence KTEAARQLGITRKTLLAKLS.

Post-translationally, phosphorylated by ZraS.

It is found in the cytoplasm. Its activity is regulated as follows. Activity of the ZraS/ZraR two-component system is repressed by the zinc-bound form of ZraP, which probably interacts with the periplasmic region of ZraS. Part of the Zra signaling pathway, an envelope stress response (ESR) system composed of the periplasmic accessory protein ZraP, the histidine kinase ZraS and the transcriptional regulator ZraR. The ZraPSR system contributes to antibiotic resistance and is important for membrane integrity in the presence of membrane-targeting biocides. ZraR is a member of the two-component regulatory system ZraS/ZraR. When activated by ZraS, acts in conjunction with sigma-54 to regulate the expression of zraP in the presence of high Zn(2+) or Pb(2+) concentrations. Also positively autoregulates the expression of the zraSR operon. The sequence is that of Transcriptional regulatory protein ZraR (zraR) from Escherichia coli O157:H7.